A 350-amino-acid polypeptide reads, in one-letter code: Protein-glutamate methylesterase/protein-glutamine glutaminase 6 (350 aa).

Residues 11-126 (RVLVVDDSAA…LAPVREELLE (116 aa)) form the Response regulatory domain. A 4-aspartylphosphate modification is found at aspartate 62. The region spanning 150-347 (ELEPARVAVV…ARLVEFARDA (198 aa)) is the CheB-type methylesterase domain. Active-site residues include serine 162, histidine 189, and aspartate 289.

Belongs to the CheB family. In terms of processing, phosphorylated by CheA. Phosphorylation of the N-terminal regulatory domain activates the methylesterase activity.

It is found in the cytoplasm. It carries out the reaction [protein]-L-glutamate 5-O-methyl ester + H2O = L-glutamyl-[protein] + methanol + H(+). It catalyses the reaction L-glutaminyl-[protein] + H2O = L-glutamyl-[protein] + NH4(+). Involved in chemotaxis. Part of a chemotaxis signal transduction system that modulates chemotaxis in response to various stimuli. Catalyzes the demethylation of specific methylglutamate residues introduced into the chemoreceptors (methyl-accepting chemotaxis proteins or MCP) by CheR. Also mediates the irreversible deamidation of specific glutamine residues to glutamic acid. The polypeptide is Protein-glutamate methylesterase/protein-glutamine glutaminase 6 (Anaeromyxobacter dehalogenans (strain 2CP-C)).